Reading from the N-terminus, the 461-residue chain is Ribulose bisphosphate carboxylase (461 aa).

Asparagine 112 contributes to the substrate binding site. Lysine 167 acts as the Proton acceptor in catalysis. Position 169 (lysine 169) interacts with substrate. Positions 192, 194, and 195 each coordinate Mg(2+). Position 192 is an N6-carboxylysine (lysine 192). The active-site Proton acceptor is the histidine 288. The substrate site is built by arginine 289, histidine 322, and serine 369.

This sequence belongs to the RuBisCO large chain family. Type II subfamily. Homodimer. Mg(2+) is required as a cofactor.

The enzyme catalyses 2 (2R)-3-phosphoglycerate + 2 H(+) = D-ribulose 1,5-bisphosphate + CO2 + H2O. It catalyses the reaction D-ribulose 1,5-bisphosphate + O2 = 2-phosphoglycolate + (2R)-3-phosphoglycerate + 2 H(+). In terms of biological role, ruBisCO catalyzes two reactions: the carboxylation of D-ribulose 1,5-bisphosphate, the primary event in carbon dioxide fixation, as well as the oxidative fragmentation of the pentose substrate. Both reactions occur simultaneously and in competition at the same active site. This Rhodopseudomonas palustris (strain HaA2) protein is Ribulose bisphosphate carboxylase.